The primary structure comprises 206 residues: Probable GTP-binding protein EngB (206 aa).

Positions 7 to 195 constitute an EngB-type G domain; that stretch reads DCDEVVLLGR…EEALQAIFSD (189 aa). GTP-binding positions include 15–22, 41–45, 60–63, 140–143, and 175–177; these read GRSNVGKS, GVTRS, DLPG, NKID, and ISA. Residues Ser22 and Thr43 each coordinate Mg(2+).

The protein belongs to the TRAFAC class TrmE-Era-EngA-EngB-Septin-like GTPase superfamily. EngB GTPase family. Mg(2+) serves as cofactor.

Its function is as follows. Necessary for normal cell division and for the maintenance of normal septation. The sequence is that of Probable GTP-binding protein EngB from Haloquadratum walsbyi (strain DSM 16790 / HBSQ001).